We begin with the raw amino-acid sequence, 280 residues long: uncharacterized protein (280 aa).

Residues 96-208 (DKSIGIFQRF…GYLSTPPPVK (113 aa)) enclose the DUF1279 domain. The helical transmembrane segment at 115–135 (VMVPVHIVTSTVWFGSFYYAA) threads the bilayer. A coiled-coil region spans residues 207–274 (VKEFLQDKME…KLQETKDKMS (68 aa)). A disordered region spans residues 245-280 (SERMEETKERFSETKDKFSEKLQETKDKMSFRKKAD).

The protein localises to the membrane. This is an uncharacterized protein from Danio rerio (Zebrafish).